Reading from the N-terminus, the 570-residue chain is Phosphocholine hydrolase Lem3 (570 aa).

Its subcellular location is the secreted. It localises to the host cytoplasm. The catalysed reaction is [Rab1 protein]-O-phosphocholine-L-serine + H2O = [Rab1 protein]-L-serine + phosphocholine + H(+). Its function is as follows. Virulence effector that plays a role in hijacking the host vesicular trafficking by recruiting the small guanosine triphosphatase (GTPase) Rab1 to the cytosolic face of the Legionella-containing vacuole (LCVs). Acts as a phosphocholine hydrolase by mediating the hydrolysis of phosphocholine to Ser residues of host RAB1 (RAB1A, RAB1B or RAB1C). Dephosphocholination of target proteins restores accessibility to GTPase effector LepB. Can act on both GDP-bound and GTP-bound Rab proteins. The protein is Phosphocholine hydrolase Lem3 (lem3) of Legionella pneumophila subsp. pneumophila (strain Philadelphia 1 / ATCC 33152 / DSM 7513).